Here is a 254-residue protein sequence, read N- to C-terminus: Tabinhibitin 6 (254 aa).

Residues 1-22 (MLPYWCPLLLAALVLQYATIDA) form the signal peptide. Positions 31 to 33 (RGD) match the Cell attachment site motif. The 145-residue stretch at 66-210 (LSKINDVRDH…KARALLTCNF (145 aa)) folds into the SCP domain.

The protein belongs to the CRISP family. In terms of tissue distribution, expressed in salivary glands.

The protein resides in the secreted. In terms of biological role, inhibits platelet aggregation induced by all agonists tested (ADP, arachidonic acid, the thromboxane A2 analog U46619, thrombin, and snake venom snaclecs (TMVA that activates platelet through GPIB, and stejnulxin that specifically acts through GPVI (GP6))). May act by competing with fibrinogen for binding to glycoprotein IIb/IIIa (ITGA2B/ITGB3). This Tabanus yao (Horsefly) protein is Tabinhibitin 6.